The sequence spans 582 residues: DNA polymerase IV (582 aa).

Positions 127-161 (NADDGQSSTDKESEISTDVESERNDDSNNKDMIQA) are disordered. The span at 135–155 (TDKESEISTDVESERNDDSNN) shows a compositional bias: basic and acidic residues. Residues 360-369 (RGYSKCGDID) form an involved in ssDNA binding region. Asp-367, Asp-369, and Asp-502 together coordinate Mg(2+).

Belongs to the DNA polymerase type-X family. Interacts with DNL4 subunit of the DNL4-LIF1 complex. It depends on Mg(2+) as a cofactor.

It is found in the nucleus. It catalyses the reaction DNA(n) + a 2'-deoxyribonucleoside 5'-triphosphate = DNA(n+1) + diphosphate. Stimulated by the interaction with the DNL4-LIF1 complex. Its function is as follows. Repair polymerase. Involved in gap-filling in DNA nonhomologous end joining (NHEJ) required for double-strand break repair. Seems to conduct DNA synthesis in a stepwise distributive fashion rather than in a processive fashion as for other DNA polymerases. Preferentially acts upon short gaps formed by the alignment of linear duplexes with complementary single-strand ends. Required for filling gaps that need removal of a 5'- or 3'-terminal mismatch, however lacks nuclease activities. This Saccharomyces cerevisiae (strain ATCC 204508 / S288c) (Baker's yeast) protein is DNA polymerase IV (POL4).